The chain runs to 216 residues: Guanylate kinase (216 aa).

One can recognise a Guanylate kinase-like domain in the interval 11–189 (GVLIVISGPS…AVKKIEAILL (179 aa)). An ATP-binding site is contributed by 18-25 (GPSGAGKG).

This sequence belongs to the guanylate kinase family.

The protein resides in the cytoplasm. The enzyme catalyses GMP + ATP = GDP + ADP. Functionally, essential for recycling GMP and indirectly, cGMP. The chain is Guanylate kinase (gmk) from Clostridium perfringens (strain 13 / Type A).